The chain runs to 92 residues: UPF0223 protein SZO_10560 (92 aa).

Belongs to the UPF0223 family.

This Streptococcus equi subsp. zooepidemicus (strain H70) protein is UPF0223 protein SZO_10560.